We begin with the raw amino-acid sequence, 221 residues long: Protein N-terminal glutamine amidohydrolase (221 aa).

Residue S2 is modified to N-acetylserine. Active-site residues include C23, H79, and D97.

This sequence belongs to the NTAQ1 family. Monomer.

The enzyme catalyses N-terminal L-glutaminyl-[protein] + H2O = N-terminal L-glutamyl-[protein] + NH4(+). Its function is as follows. Mediates the side-chain deamidation of N-terminal glutamine residues to glutamate, an important step in N-end rule pathway of protein degradation. Conversion of the resulting N-terminal glutamine to glutamate renders the protein susceptible to arginylation, polyubiquitination and degradation as specified by the N-end rule. Does not act on substrates with internal or C-terminal glutamine and does not act on non-glutamine residues in any position. Involved in immune response. Controls the expression of specific defense-response genes, activates the synthesis pathway for the phytoalexin camalexin, and influences basal resistance to the hemibiotroph pathogen Pseudomonas syringae pv tomato (Pst). This Arabidopsis thaliana (Mouse-ear cress) protein is Protein N-terminal glutamine amidohydrolase.